A 110-amino-acid chain; its full sequence is MRVALVFLVLSILAATHGDTNLDMERKEADESSLSEMKEMLLLQELQAVEAALFGKMNVENDENRDFREKRCGGYGMSCKSVQDCCGELDCRKDPSTWIDHPYCLNPKKG.

An N-terminal signal peptide occupies residues 1–18 (MRVALVFLVLSILAATHG). 3 disulfides stabilise this stretch: C72/C86, C79/C91, and C85/C104.

In terms of tissue distribution, expressed by the venom gland.

It is found in the secreted. Functionally, probable ion channel inhibitor. The sequence is that of U12-hexatoxin-Hi1a from Hadronyche infensa (Fraser island funnel-web spider).